The primary structure comprises 428 residues: GTPase Obg (428 aa).

Residues 1–158 (MFVDQVKIYV…RDVILELKVL (158 aa)) enclose the Obg domain. The OBG-type G domain maps to 159-329 (ADVGLVGFPS…LLFEVANLIE (171 aa)). GTP is bound by residues 165-172 (GFPSVGKS), 190-194 (FTTIV), 212-215 (DLPG), 282-285 (NKMD), and 310-312 (SAV). Positions 172 and 192 each coordinate Mg(2+). The OCT domain occupies 350-428 (KFDTEGVKFE…ILEYEFEFID (79 aa)).

Belongs to the TRAFAC class OBG-HflX-like GTPase superfamily. OBG GTPase family. In terms of assembly, monomer. It depends on Mg(2+) as a cofactor.

Its subcellular location is the cytoplasm. Functionally, an essential GTPase which binds GTP, GDP and possibly (p)ppGpp with moderate affinity, with high nucleotide exchange rates and a fairly low GTP hydrolysis rate. Plays a role in control of the cell cycle, stress response, ribosome biogenesis and in those bacteria that undergo differentiation, in morphogenesis control. The protein is GTPase Obg of Bacillus cereus (strain B4264).